The following is a 425-amino-acid chain: Protein CLP1 homolog (425 aa).

ATP-binding positions include E18, K59, and 121 to 126; that span reads DVGKST.

This sequence belongs to the Clp1 family. Clp1 subfamily.

It localises to the nucleus. Functionally, required for endonucleolytic cleavage during polyadenylation-dependent pre-mRNA 3'-end formation. This chain is Protein CLP1 homolog (cbc), found in Drosophila grimshawi (Hawaiian fruit fly).